A 1451-amino-acid polypeptide reads, in one-letter code: Fanconi anemia group D2 protein homolog (1451 aa).

Residues M1 to D291 form an interaction with FANCE region. Position 222 is a phosphoserine (S222). The segment at V248–T359 is interaction with BRCA2. A Glycyl lysine isopeptide (Lys-Gly) (interchain with G-Cter in ubiquitin) cross-link involves residue K561. Residue S716 is modified to Phosphoserine. Residues A858–A879 are disordered. Residues K860–K871 are compositionally biased toward basic residues. S1257, S1406, and S1414 each carry phosphoserine. The disordered stretch occupies residues I1399–S1451. Positions D1430–S1451 are enriched in acidic residues.

The protein belongs to the Fanconi anemia protein FANCD2 family. Homodimer; cannot be ubiquitinated and does not bind DNA. Part of a FANCI-FANCD2 heterodimeric complex that binds and scans dsDNA for DNA damage. Interacts directly with FANCE and FANCI. Interacts with USP1 and MEN1. The ubiquitinated form specifically interacts with BRCA1 and BLM. Both the nonubiquitinated and the monoubiquitinated forms interact with BRCA2; this interaction is mediated by phosphorylated FANCG and the complex also includes XCCR3. The ubiquitinated form specifically interacts with MTMR15/FAN1 (via UBZ-type zinc finger), leading to recruit MTMR15/FAN1 to sites of DNA damage. Interacts with DCLRE1B/Apollo. Interacts with POLN. Interacts with UHRF1 and UHRF2; these interactions promote FANCD2 activation. In terms of processing, monoubiquitinated on Lys-561 during S phase and upon genotoxic stress by FANCL in complex with E2 ligases UBE2T or UBE2W. Deubiquitinated by USP1 as cells enter G2/M, or once DNA repair is completed. Monoubiquitination requires the joint intervention of the FANC core complex, including FANCA, FANCB, FANCC, FANCE, FANCF, FANCG, and FANCM, and proteins involved in cell cycle checkpoints and DNA repair, including RPA1, ATR, CHEK1 and BRCA1, and is mediated by FANCL/PHF9. Monoubiquitination prevents DNA release from the FANCI-FANCD2 complex. FANCD2 is only ubiquitinated in the FANCI-FANCD2 complex and the monoubiquitination of FANCD2 is promoted by phosphorylation of FANCI. Ubiquitination is required for binding to chromatin, interaction with BRCA1, BRCA2 and MTMR15/FAN1, DNA repair, and normal cell cycle progression. Phosphorylated on several sites including Ser-222 and Ser-1401 in response to genotoxic stress by ATM and/or ATR.

It is found in the nucleus. Functionally, required for maintenance of chromosomal stability. Promotes accurate and efficient pairing of homologs during meiosis. Involved in the repair of DNA double-strand breaks, both by homologous recombination and single-strand annealing. The FANCI-FANCD2 complex binds and scans double-stranded DNA (dsDNA) for DNA damage; this complex stalls at DNA junctions between double-stranded DNA and single-stranded DNA. May participate in S phase and G2 phase checkpoint activation upon DNA damage. Plays a role in preventing breakage and loss of missegregating chromatin at the end of cell division, particularly after replication stress. Promotes BRCA2/FANCD1 loading onto damaged chromatin. May also be involved in B-cell immunoglobulin isotype switching. This chain is Fanconi anemia group D2 protein homolog (Fancd2), found in Rattus norvegicus (Rat).